The following is a 1070-amino-acid chain: Error-prone DNA polymerase (1070 aa).

This sequence belongs to the DNA polymerase type-C family. DnaE2 subfamily.

It localises to the cytoplasm. The catalysed reaction is DNA(n) + a 2'-deoxyribonucleoside 5'-triphosphate = DNA(n+1) + diphosphate. In terms of biological role, DNA polymerase involved in damage-induced mutagenesis and translesion synthesis (TLS). It is not the major replicative DNA polymerase. The polypeptide is Error-prone DNA polymerase (Aromatoleum aromaticum (strain DSM 19018 / LMG 30748 / EbN1) (Azoarcus sp. (strain EbN1))).